Here is a 416-residue protein sequence, read N- to C-terminus: Phosphoglycerate kinase (416 aa).

Residues V23, D24, F25, N26, Q38, R39, S62, H63, G65, R66, L121, R122, H168, and R169 each coordinate (2R)-3-phosphoglycerate. Residue G212 participates in ADP binding. G212 provides a ligand contact to CDP. A213 and K214 together coordinate AMP. Position 213 (A213) interacts with ATP. Position 213 (A213) interacts with Mg(2+). D217 contacts CDP. D217 provides a ligand contact to Mg(2+). Position 218 (K218) interacts with AMP. K218 is a binding site for ATP. G236 lines the ADP pocket. G236 provides a ligand contact to CDP. The AMP site is built by G237 and G311. The ATP site is built by G237 and G311. G336 and F341 together coordinate CDP. F341 contributes to the ADP binding site. AMP is bound at residue E342. ATP-binding residues include E342, D373, and T374. Residue D373 coordinates Mg(2+).

It belongs to the phosphoglycerate kinase family. As to quaternary structure, monomer. Requires Mg(2+) as cofactor.

It is found in the cytoplasm. It localises to the mitochondrion. The enzyme catalyses (2R)-3-phosphoglycerate + ATP = (2R)-3-phospho-glyceroyl phosphate + ADP. Its pathway is carbohydrate degradation; glycolysis; pyruvate from D-glyceraldehyde 3-phosphate: step 2/5. Catalyzes one of the two ATP producing reactions in the glycolytic pathway via the reversible conversion of 1,3-diphosphoglycerate to 3-phosphoglycerate. Both L- and D- forms of purine and pyrimidine nucleotides can be used as substrates, but the activity is much lower on pyrimidines. Negatively regulates the biosynthesis of acetyl-CoA from pyruvate in the mitochondrion. The chain is Phosphoglycerate kinase (PGK1) from Debaryomyces hansenii (strain ATCC 36239 / CBS 767 / BCRC 21394 / JCM 1990 / NBRC 0083 / IGC 2968) (Yeast).